The sequence spans 361 residues: 3-isopropylmalate dehydrogenase (361 aa).

78 to 91 (GTQWDSLPRHLRPE) is an NAD(+) binding site. 4 residues coordinate substrate: R98, R108, R136, and D226. Mg(2+) contacts are provided by D226, D250, and D254. NAD(+) is bound at residue 284 to 296 (GSAPDIAGQDKAN).

Belongs to the isocitrate and isopropylmalate dehydrogenases family. LeuB type 1 subfamily. As to quaternary structure, homodimer. Mg(2+) serves as cofactor. Mn(2+) is required as a cofactor.

The protein resides in the cytoplasm. It carries out the reaction (2R,3S)-3-isopropylmalate + NAD(+) = 4-methyl-2-oxopentanoate + CO2 + NADH. The protein operates within amino-acid biosynthesis; L-leucine biosynthesis; L-leucine from 3-methyl-2-oxobutanoate: step 3/4. Catalyzes the oxidation of 3-carboxy-2-hydroxy-4-methylpentanoate (3-isopropylmalate) to 3-carboxy-4-methyl-2-oxopentanoate. The product decarboxylates to 4-methyl-2 oxopentanoate. The protein is 3-isopropylmalate dehydrogenase of Thermosynechococcus vestitus (strain NIES-2133 / IAM M-273 / BP-1).